We begin with the raw amino-acid sequence, 503 residues long: ATP synthase subunit alpha (503 aa).

170-177 (GDKQTGKT) contacts ATP.

The protein belongs to the ATPase alpha/beta chains family. As to quaternary structure, F-type ATPases have 2 components, CF(1) - the catalytic core - and CF(0) - the membrane proton channel. CF(1) has five subunits: alpha(3), beta(3), gamma(1), delta(1), epsilon(1). CF(0) has three main subunits: a(1), b(2) and c(9-12). The alpha and beta chains form an alternating ring which encloses part of the gamma chain. CF(1) is attached to CF(0) by a central stalk formed by the gamma and epsilon chains, while a peripheral stalk is formed by the delta and b chains.

It localises to the cell inner membrane. It catalyses the reaction ATP + H2O + 4 H(+)(in) = ADP + phosphate + 5 H(+)(out). In terms of biological role, produces ATP from ADP in the presence of a proton gradient across the membrane. The alpha chain is a regulatory subunit. The chain is ATP synthase subunit alpha from Helicobacter pylori (strain G27).